The sequence spans 200 residues: NAD(P)H dehydrogenase (quinone) (200 aa).

The Flavodoxin-like domain occupies L4–V191. FMN-binding positions include S10–V15 and T79–F81. Position 12 (Y12) interacts with NAD(+). W99 lines the substrate pocket. Residues S114–G120 and H135 contribute to the FMN site.

The protein belongs to the WrbA family. The cofactor is FMN.

It catalyses the reaction a quinone + NADH + H(+) = a quinol + NAD(+). It carries out the reaction a quinone + NADPH + H(+) = a quinol + NADP(+). The protein is NAD(P)H dehydrogenase (quinone) of Nitrosococcus oceani (strain ATCC 19707 / BCRC 17464 / JCM 30415 / NCIMB 11848 / C-107).